Here is a 299-residue protein sequence, read N- to C-terminus: Mimecan (299 aa).

A signal peptide spans 1 to 19; that stretch reads MKTLQSTLLLFLFVPLIKP. N89 is a glycosylation site (N-linked (GlcNAc...) (keratan sulfate) asparagine). 7 LRR repeats span residues 113–132, 133–156, 157–180, 181–200, 201–226, 227–247, and 248–278; these read DAVPPLPKESAYLYARFNKI, KKLTAKDFADIPNLRRLDFTGNLI, EDIEDGTFSKLSLLEELTLAENQL, LKLPVLPPKLTLFNAKYNKI, KSRGIKANTFKKLHNLSFLYLDHNAL, ESVPLNLPESLRVIHLQFNNI, and TSITDDTFCKANDTSYIRDRIEEIRLEGNPV. The N-linked (GlcNAc...) (keratan sulfate) asparagine glycan is linked to N215. N-linked (GlcNAc...) asparagine glycosylation is present at N246. A disulfide bond links C256 and C289. N-linked (GlcNAc...) (keratan sulfate) asparagine glycosylation is present at N259.

The protein belongs to the small leucine-rich proteoglycan (SLRP) family. SLRP class III subfamily. Post-translationally, contains keratan sulfate. Keratan sulfate attachment is observed in the cornea but the protein also exists in other tissues without keratan sulfate. In terms of processing, the 12 kDa OIF in bone and the 25 kDa KSPG25 protein in cornea are probably proteolytic fragments. Bone and cornea.

Its subcellular location is the secreted. The protein localises to the extracellular space. The protein resides in the extracellular matrix. Induces bone formation in conjunction with TGF-beta-1 or TGF-beta-2. This Bos taurus (Bovine) protein is Mimecan (OGN).